We begin with the raw amino-acid sequence, 344 residues long: N-acetyl-gamma-glutamyl-phosphate reductase (344 aa).

Cysteine 150 is a catalytic residue.

Belongs to the NAGSA dehydrogenase family. Type 1 subfamily.

It localises to the cytoplasm. The enzyme catalyses N-acetyl-L-glutamate 5-semialdehyde + phosphate + NADP(+) = N-acetyl-L-glutamyl 5-phosphate + NADPH + H(+). It participates in amino-acid biosynthesis; L-arginine biosynthesis; N(2)-acetyl-L-ornithine from L-glutamate: step 3/4. Catalyzes the NADPH-dependent reduction of N-acetyl-5-glutamyl phosphate to yield N-acetyl-L-glutamate 5-semialdehyde. The sequence is that of N-acetyl-gamma-glutamyl-phosphate reductase from Pseudomonas syringae pv. syringae (strain B728a).